Reading from the N-terminus, the 274-residue chain is 3-deoxy-manno-octulosonate cytidylyltransferase (274 aa).

The protein belongs to the KdsB family.

It localises to the cytoplasm. It carries out the reaction 3-deoxy-alpha-D-manno-oct-2-ulosonate + CTP = CMP-3-deoxy-beta-D-manno-octulosonate + diphosphate. It functions in the pathway nucleotide-sugar biosynthesis; CMP-3-deoxy-D-manno-octulosonate biosynthesis; CMP-3-deoxy-D-manno-octulosonate from 3-deoxy-D-manno-octulosonate and CTP: step 1/1. It participates in bacterial outer membrane biogenesis; lipopolysaccharide biosynthesis. Functionally, activates KDO (a required 8-carbon sugar) for incorporation into bacterial lipopolysaccharide in Gram-negative bacteria. This Bordetella avium (strain 197N) protein is 3-deoxy-manno-octulosonate cytidylyltransferase.